The following is a 440-amino-acid chain: MNITVIGTGYVGLVTGVSLSEIGHHVTCIDIDAHKIDEMRKGISPIFEPGLEELMRKNTADGRLNFETSYEKGLAQADIIFIAVGTPQKSDGHANLEQITDAAKRIAKHVKRDTVVVTKSTVPVGTNDLINGLITEHLAEPVSISVASNPEFLREGSAIYDTFHGDRIVIGTADEKTANTLEELFRPFQIPIYQTDIRSAEMIKYASNAFLATKISFINEISNICEKVGADIEAVAYGMGQDKRIGSQFLKAGIGYGGSCFPKDTNALVQIAGNVEHDFELLKSVIKVNNNQQAMLVDKALNRLGGVTGKTIALLGLSFKPNTDDMREAPSIVIADRLAALDARIRAYDPIAVSHAKHVLPQAVEYKETIEEAVKGSDAVMILTDWADIKQFPLAAYQDLMETPLIFDGRNCYTLDEALAAGVEYYSVGRKAVVPSGAIQ.

NAD(+) contacts are provided by residues 2 to 19 (NITV…GVSL), valine 11, aspartate 30, lysine 35, threonine 121, and glutamate 155. Substrate is bound by residues 151–155 (EFLRE), lysine 204, asparagine 208, 249–253 (FLKAG), and glycine 257. The active-site Nucleophile is cysteine 260. Residue lysine 263 coordinates NAD(+). Residue lysine 320 participates in substrate binding. Residue arginine 327 participates in NAD(+) binding.

Belongs to the UDP-glucose/GDP-mannose dehydrogenase family. Phosphorylated on tyrosine residue(s). Phosphorylated by YwqD and dephosphorylated by YwqE in vitro.

It localises to the cytoplasm. The enzyme catalyses UDP-alpha-D-glucose + 2 NAD(+) + H2O = UDP-alpha-D-glucuronate + 2 NADH + 3 H(+). It participates in nucleotide-sugar biosynthesis; UDP-alpha-D-glucuronate biosynthesis; UDP-alpha-D-glucuronate from UDP-alpha-D-glucose: step 1/1. Its activity is regulated as follows. Competitively inhibited by UDP-glucose. Activated by phosphorylation, which may increase affinity for NAD(+); inhibited by dephosphorylation. In terms of biological role, catalyzes the conversion of UDP-glucose into UDP-glucuronate, one of the precursors of teichuronic acid. In Bacillus subtilis (strain 168), this protein is UDP-glucose 6-dehydrogenase YwqF (ywqF).